We begin with the raw amino-acid sequence, 313 residues long: Ornithine carbamoyltransferase (313 aa).

Residues 61 to 64 (STRT), Gln-88, Arg-112, and 139 to 142 (HPCQ) each bind carbamoyl phosphate. L-ornithine is bound by residues Asn-170, Asp-228, and 232–233 (SM). Carbamoyl phosphate-binding positions include 268-269 (CL) and Arg-296.

Belongs to the aspartate/ornithine carbamoyltransferase superfamily. OTCase family.

It is found in the cytoplasm. The enzyme catalyses carbamoyl phosphate + L-ornithine = L-citrulline + phosphate + H(+). It functions in the pathway amino-acid biosynthesis; L-arginine biosynthesis; L-arginine from L-ornithine and carbamoyl phosphate: step 1/3. Functionally, reversibly catalyzes the transfer of the carbamoyl group from carbamoyl phosphate (CP) to the N(epsilon) atom of ornithine (ORN) to produce L-citrulline. The polypeptide is Ornithine carbamoyltransferase (Bordetella avium (strain 197N)).